The sequence spans 254 residues: MVIANSNIIFVAGLGGIGLDTSREIVKSGPKNLVLLDRIDNPAAIAELSALNPKVTVTFYPYDVTVPLDETKKLLKTIFDKLKTVDLLINGAGILDDNQIERTIAVNFTGTVNTTTAIMDFWDKRKGGPGGVVANICSVTGFNSIYQVPVYSASKAAALSFTTSFRKLAGITGVTAYSINPGITKTVLVHKFNSWLGVEPRVAELLLEHPTQTTLQCGQNFVKAIEANQNGAIWKLDLGRLDAIEWTKHWDSGI.

10-33 lines the NAD(+) pocket; it reads FVAGLGGIGLDTSREIVKSGPKNL. Residue serine 138 participates in substrate binding. The active-site Proton acceptor is the tyrosine 151.

This sequence belongs to the short-chain dehydrogenases/reductases (SDR) family. In terms of assembly, homodimer.

The enzyme catalyses a primary alcohol + NAD(+) = an aldehyde + NADH + H(+). It carries out the reaction a secondary alcohol + NAD(+) = a ketone + NADH + H(+). This chain is Alcohol dehydrogenase (Adh), found in Drosophila adiastola (Fruit fly).